Consider the following 1266-residue polypeptide: TBC1 domain family member 9 (1266 aa).

GRAM domains follow at residues 146–213 (VKFH…EKNA) and 293–361 (ERYR…EKAD). The disordered stretch occupies residues 415–456 (SYNSSDDEVYSRPSSLVSSSPQRSTSSDADGERQFNLNGNSV). The span at 425–441 (SRPSSLVSSSPQRSTSS) shows a compositional bias: low complexity. The Rab-GAP TBC domain occupies 515-702 (GIPESMRGEL…VVVDCFFYEG (188 aa)). An EF-hand domain is found at 886-921 (HSDVLASRLFQLLDENGDSLINFREFVSGLSAACHG). Disordered stretches follow at residues 1075-1095 (AKEGGSGGSGPSCHQGIPGVL) and 1132-1164 (DIKLEDSSPRDNGACSSMLISDDDTKDDSSMSS).

May act as a GTPase-activating protein for Rab family protein(s). The protein is TBC1 domain family member 9 (TBC1D9) of Homo sapiens (Human).